The sequence spans 237 residues: Heme oxygenase (237 aa).

Heme b is bound at residue His-17.

Belongs to the heme oxygenase family.

The protein resides in the plastid. It is found in the chloroplast. The catalysed reaction is heme b + 3 reduced [NADPH--hemoprotein reductase] + 3 O2 = biliverdin IXalpha + CO + Fe(2+) + 3 oxidized [NADPH--hemoprotein reductase] + 3 H2O + H(+). Its function is as follows. Catalyzes the opening of the heme ring with the release of iron. Key enzyme in the synthesis of the chromophoric part of the photosynthetic antennae. This is Heme oxygenase (pbsA) from Guillardia theta (Cryptophyte).